Reading from the N-terminus, the 299-residue chain is 21S rRNA pseudouridine(2819) synthase (299 aa).

Residue Asp106 is part of the active site.

This sequence belongs to the pseudouridine synthase RluA family.

The protein localises to the mitochondrion. It catalyses the reaction uridine(2819) in 21S rRNA = pseudouridine(2819) in 21S rRNA. In terms of biological role, pseudouridylate synthase responsible for the pseudouridine-2819 formation in mitochondrial 21S rRNA. May modulate the efficiency or the fidelity of the mitochondrial translation machinery. This Kluyveromyces lactis (strain ATCC 8585 / CBS 2359 / DSM 70799 / NBRC 1267 / NRRL Y-1140 / WM37) (Yeast) protein is 21S rRNA pseudouridine(2819) synthase (PUS5).